Reading from the N-terminus, the 883-residue chain is DNA mismatch repair protein MutS (883 aa).

602–609 (GPNMSGKS) contacts ATP.

The protein belongs to the DNA mismatch repair MutS family.

In terms of biological role, this protein is involved in the repair of mismatches in DNA. It is possible that it carries out the mismatch recognition step. This protein has a weak ATPase activity. This chain is DNA mismatch repair protein MutS, found in Staphylococcus haemolyticus (strain JCSC1435).